Consider the following 498-residue polypeptide: MASQGTKRSYEQMETGGERQNANEIRASVGRMVGGIGRFYIQMCTELKLSDNEGRLIQNSITIERMVLSAFDERRNKYLEEHPSTGRDPKKTGGPIYRRRDGKWVRELVLYDKEELRRIWRQANNGEDATAGLTHLMIWHSNLNDATYQRTRALVRTGMDPRMCSLMQGSTLPRRSGAAGAAVKGVGTMVMELIRMIKRGVNDRNFWRGENGRRTRIAYERMCNILKGKFQTAAQRAMMDQVRESRNPGNAEIEDLIFLARSALILRGAVAHKSCLPACVYGLAVASGYDFEREGYSLVGIDPFRLLQNSQVFSLIRPNENPAHKSQLVWMACHSAAFEDLRVSSFIRGTRVLPRGQLSTRGVQIASNENMETMNSSTLELRSKYWAIRTRSGGNTNQQRASAGQVSVQPSFSVQRNLPFERATIMAAFTGNPEGRTSDMRTEIIRMMENSRPEDVSFQGRGVFELSDEKATNPIVPSFDMSNEGSYFFGDNAEEYDN.

The short motif at 1–18 is the Unconventional nuclear localization signal element; it reads MASQGTKRSYEQMETGGE. Residues 1 to 22 are disordered; the sequence is MASQGTKRSYEQMETGGERQNA. The short motif at 198-216 is the Bipartite nuclear localization signal element; sequence KRGVNDRNFWRGENGRRTR.

Belongs to the influenza viruses nucleoprotein family. As to quaternary structure, homomultimerizes to form the nucleocapsid. May bind host exportin-1/XPO1. Binds to viral genomic RNA. Protein-RNA contacts are mediated by a combination of electrostatic interactions between positively charged residues and the phosphate backbone and planar interactions between aromatic side chains and bases. Late in virus-infected cells, may be cleaved from a 56-kDa protein to a 53-kDa protein by a cellular caspase. This cleavage might be a marker for the onset of apoptosis in infected cells or have a specific function in virus host interaction.

The protein resides in the virion. The protein localises to the host nucleus. In terms of biological role, encapsidates the negative strand viral RNA, protecting it from nucleases. The encapsidated genomic RNA is termed the ribonucleoprotein (RNP) and serves as template for transcription and replication. The RNP needs to be localized in the host nucleus to start an infectious cycle, but is too large to diffuse through the nuclear pore complex. NP comprises at least 2 nuclear localization signals that are responsible for the active RNP import into the nucleus through cellular importin alpha/beta pathway. Later in the infection, nclear export of RNPs are mediated through viral proteins NEP interacting with M1 which binds nucleoproteins. It is possible that nucleoprotein binds directly host exportin-1/XPO1 and plays an active role in RNPs nuclear export. M1 interaction with RNP seems to hide nucleoprotein's nuclear localization signals. Soon after a virion infects a new cell, M1 dissociates from the RNP under acidification of the virion driven by M2 protein. Dissociation of M1 from RNP unmasks nucleoprotein's nuclear localization signals, targeting the RNP to the nucleus. The protein is Nucleoprotein of Influenza A virus (strain A/Gull/Maryland/1815/1979 H13N6).